We begin with the raw amino-acid sequence, 1915 residues long: Protein NLRC5 (1915 aa).

The tract at residues Leu-103–Lys-137 is disordered. The region spanning Arg-223–Glu-542 is the NACHT domain. ATP is bound at residue Gly-229 to Thr-236. 27 LRR repeats span residues Val-622–Asn-646, Met-716–Thr-740, Cys-744–Ser-771, Leu-772–Val-796, Ser-871–Gln-898, His-900–Ala-923, Leu-930–Gln-953, Thr-1006–Gly-1033, Leu-1034–Leu-1055, Glu-1138–Leu-1161, Pro-1162–Asp-1184, Cys-1240–Glu-1263, Leu-1265–Thr-1292, Ala-1348–Asn-1371, Ser-1481–Val-1504, Cys-1519–Gly-1542, Lys-1552–Met-1575, Thr-1576–Ala-1598, Leu-1603–Ala-1626, Leu-1631–Ala-1654, Leu-1659–Ala-1682, Leu-1687–Ser-1711, Phe-1715–Gln-1738, Pro-1741–Gln-1768, Cys-1769–Leu-1795, Phe-1821–Val-1845, and Met-1849–Gln-1872.

Belongs to the NLRP family. In terms of assembly, interacts with CHUK and IKBKB; prevents CHUK and IKBKB phosphorylation and inhibits their kinase activity. Interacts with RIGI and IFIH1; blocks the interaction of MAVS to RIGI. In terms of tissue distribution, expressed in spleen, thymus and lung.

It is found in the cytoplasm. Functionally, probable regulator of the NF-kappa-B and type I interferon signaling pathways. May also regulate the type II interferon signaling pathway. Plays a role in homeostatic control of innate immunity and in antiviral defense mechanisms. This chain is Protein NLRC5 (Nlrc5), found in Mus musculus (Mouse).